The primary structure comprises 249 residues: MKVLVAVKRVVDYNVKVRVKADNSGVDLANVKMSMNPFCEIAVEEAVRLKEKGVATEIVAVSVGPTAAQEQLRTALALGADRAILVESNDELNSLAVAKLLKAVVDKEQPQLVILGKQAIDSDNNQTGQMLAALTGYAQGTFASKVEVAGDKVNVTREIDGGLQTVALNLPAIVTTDLRLNEPRYASLPNIMKAKKKPLDVVTPDALGVSTASTVKTLKVEAPAARSAGIKVKSVAELVEKLKNEAKVI.

The protein belongs to the ETF beta-subunit/FixA family. In terms of assembly, heterodimer of an alpha and a beta subunit. It depends on FAD as a cofactor. AMP is required as a cofactor.

In terms of biological role, the electron transfer flavoprotein serves as a specific electron acceptor for other dehydrogenases. It transfers the electrons to the main respiratory chain via ETF-ubiquinone oxidoreductase (ETF dehydrogenase). The protein is Electron transfer flavoprotein subunit beta (etfB) of Pseudomonas aeruginosa (strain ATCC 15692 / DSM 22644 / CIP 104116 / JCM 14847 / LMG 12228 / 1C / PRS 101 / PAO1).